We begin with the raw amino-acid sequence, 427 residues long: Serine/threonine-protein kinase ssn3 (427 aa).

The Protein kinase domain maps to 40 to 369 (YHIVGFISSG…AQEALEHPYF (330 aa)). Residues 46-54 (ISSGTYGRV) and K70 each bind ATP. The Proton acceptor role is filled by D172. The span at 390–399 (RRVTQDDNDI) shows a compositional bias: basic and acidic residues. Residues 390–427 (RRVTQDDNDIRSGSLPGTKRSGLPDDSLLGRATKRLKE) form a disordered region.

Belongs to the protein kinase superfamily. CMGC Ser/Thr protein kinase family. CDC2/CDKX subfamily. As to quaternary structure, component of the srb8-11 complex, a regulatory module of the Mediator complex. Mg(2+) serves as cofactor.

The protein localises to the nucleus. It catalyses the reaction L-seryl-[protein] + ATP = O-phospho-L-seryl-[protein] + ADP + H(+). It carries out the reaction L-threonyl-[protein] + ATP = O-phospho-L-threonyl-[protein] + ADP + H(+). The enzyme catalyses [DNA-directed RNA polymerase] + ATP = phospho-[DNA-directed RNA polymerase] + ADP + H(+). Functionally, component of the srb8-11 complex. The srb8-11 complex is a regulatory module of the Mediator complex which is itself involved in regulation of basal and activated RNA polymerase II-dependent transcription. The srb8-11 complex may be involved in the transcriptional repression of a subset of genes regulated by Mediator. It may inhibit the association of the Mediator complex with RNA polymerase II to form the holoenzyme complex. The srb8-11 complex phosphorylates the C-terminal domain (CTD) of the largest subunit of RNA polymerase II. The sequence is that of Serine/threonine-protein kinase ssn3 (ssn3) from Aspergillus niger (strain ATCC MYA-4892 / CBS 513.88 / FGSC A1513).